We begin with the raw amino-acid sequence, 506 residues long: Methylthioalkylmalate synthase 2, chloroplastic (506 aa).

The transit peptide at 1–49 directs the protein to the chloroplast; sequence MASSLLTSSGMIPTTGSTVVGRSVLPFQSSLHSLRLTHSYKNPALFISC. Residues 85–359 form the Pyruvate carboxyltransferase domain; sequence VRVFDTTLRD…YTRIDTRQIM (275 aa).

This sequence belongs to the alpha-IPM synthase/homocitrate synthase family.

It localises to the plastid. The protein resides in the chloroplast. The catalysed reaction is an omega-(methylsulfanyl)-2-oxoalkanoate + acetyl-CoA + H2O = a 2-(omega-methylsulfanyl)alkylmalate + CoA + H(+). Functionally, catalyzes only the first methionine chain elongation cycle. In Arabidopsis thaliana (Mouse-ear cress), this protein is Methylthioalkylmalate synthase 2, chloroplastic (MAM2).